The sequence spans 514 residues: Protein farnesyltransferase subunit beta (514 aa).

Positions 1–13 (MRHHTKNLRRRAI) are enriched in basic residues. The disordered stretch occupies residues 1–56 (MRHHTKNLRRRAIFLRTTPRGNMDSSSSVATSTSSSSNHRLVRSSEGSPSAGGDDI). Positions 25-39 (SSSSVATSTSSSSNH) are enriched in low complexity. PFTB repeat units follow at residues 180–221 (AESL…AVVG), 231–272 (RRAL…SLLN), 293–334 (FTGL…SLLG), 346–388 (IERL…PLIE), and 410–454 (REGL…SSAQ). (2E,6E)-farnesyl diphosphate contacts are provided by residues 319 to 322 (HGAY) and 367 to 370 (RTNK). 2 residues coordinate Zn(2+): D373 and C375. 376-379 (YSHW) is a (2E,6E)-farnesyl diphosphate binding site. H442 is a Zn(2+) binding site.

Belongs to the protein prenyltransferase subunit beta family. In terms of assembly, heterodimer of an alpha and a beta subunit. Interacts with RAS1 and RAS2. Zn(2+) serves as cofactor. In terms of tissue distribution, highly expressed in mycelium, conidium, conidial germination, early formed appressorium and the late infection hypha.

It is found in the cytoplasm. The enzyme catalyses L-cysteinyl-[protein] + (2E,6E)-farnesyl diphosphate = S-(2E,6E)-farnesyl-L-cysteinyl-[protein] + diphosphate. Functionally, catalyzes the transfer of a farnesyl moiety from farnesyl diphosphate to a cysteine at the fourth position from the C-terminus of several proteins having the C-terminal sequence Cys-aliphatic-aliphatic-X. The beta subunit is responsible for peptide-binding. The polypeptide is Protein farnesyltransferase subunit beta (RAM1) (Pyricularia oryzae (strain 70-15 / ATCC MYA-4617 / FGSC 8958) (Rice blast fungus)).